Consider the following 382-residue polypeptide: MSGYTVKPPTGDTNEQTQFIDYFNLFYSKRGQEQISISQQLGNYGTTFFSASRQSYWNTSRSDQQISFGLNVPFGDITTSLNYSYSNNIWQNDRDHLLAFTLNVPFSHWMRTDSQSAFRNSNASYSMSNDLKGGMTNLSGVYGTLLPDNNLNYSVQVGNTHGGNTSSGTSGYSSLNYRGAYGNTNVGYSRSGDSSQIYYGMSGGIIAHADGITFGQPLGDTMVLVKAPGADNVKIENQTGIHTDWRGYAILPFATEYRENRVALNANSLADNVELDETVVTVIPTHGAIARATFNAQIGGKVLMTLKYGNKSVPFGAIVTHGENKNGSIVAENGQVYLTGLPQSGQLQVSWGKDKNSNCIVEYKLPEVSPGTLLNQQTAICR.

This Escherichia coli (strain K12) protein is Fimbrial usher domain-containing protein YdeT (ydeT).